We begin with the raw amino-acid sequence, 1024 residues long: Beta-galactosidase (1024 aa).

Substrate is bound by residues Asn103 and Asp202. A Na(+)-binding site is contributed by Asp202. The Mg(2+) site is built by Glu417, His419, and Glu462. Substrate is bound by residues Glu462 and Glu538–His541. Catalysis depends on Glu462, which acts as the Proton donor. Glu538 functions as the Nucleophile in the catalytic mechanism. Mg(2+) is bound at residue Asn598. Phe602 and Asn605 together coordinate Na(+). 2 residues coordinate substrate: Asn605 and Trp1000.

It belongs to the glycosyl hydrolase 2 family. In terms of assembly, homotetramer. Requires Mg(2+) as cofactor. Na(+) serves as cofactor.

It carries out the reaction Hydrolysis of terminal non-reducing beta-D-galactose residues in beta-D-galactosides.. This Shigella dysenteriae serotype 1 (strain Sd197) protein is Beta-galactosidase.